The sequence spans 337 residues: Monoacylglycerol lipase ABHD6 (337 aa).

The Extracellular portion of the chain corresponds to 1–8 (MDLDVVNM). Residues 9-29 (FVIAGGTLAIPILAFVASFLL) form a helical; Signal-anchor for type II membrane protein membrane-spanning segment. The Cytoplasmic portion of the chain corresponds to 30–337 (WPSALIRIYY…HNPDNNKKLN (308 aa)). S148 functions as the Nucleophile in the catalytic mechanism. Catalysis depends on charge relay system residues D278 and H306.

This sequence belongs to the AB hydrolase superfamily.

Its subcellular location is the late endosome membrane. The protein resides in the lysosome membrane. The protein localises to the mitochondrion membrane. The catalysed reaction is Hydrolyzes glycerol monoesters of long-chain fatty acids.. It catalyses the reaction 1-octanoylglycerol + H2O = octanoate + glycerol + H(+). It carries out the reaction 1-decanoylglycerol + H2O = decanoate + glycerol + H(+). The enzyme catalyses 1-dodecanoylglycerol + H2O = dodecanoate + glycerol + H(+). The catalysed reaction is 1-tetradecanoylglycerol + H2O = tetradecanoate + glycerol + H(+). It catalyses the reaction 2-hexadecanoylglycerol + H2O = glycerol + hexadecanoate + H(+). It carries out the reaction 2-(9Z-octadecenoyl)-glycerol + H2O = glycerol + (9Z)-octadecenoate + H(+). The enzyme catalyses 1-(9Z-octadecenoyl)-glycerol + H2O = glycerol + (9Z)-octadecenoate + H(+). The catalysed reaction is 2-(9Z,12Z-octadecadienoyl)-glycerol + H2O = (9Z,12Z)-octadecadienoate + glycerol + H(+). It catalyses the reaction 2-(5Z,8Z,11Z,14Z-eicosatetraenoyl)-glycerol + H2O = glycerol + (5Z,8Z,11Z,14Z)-eicosatetraenoate + H(+). It carries out the reaction 1-(5Z,8Z,11Z,14Z-eicosatetraenoyl)-glycerol + H2O = glycerol + (5Z,8Z,11Z,14Z)-eicosatetraenoate + H(+). The enzyme catalyses 1-(9Z,12Z-octadecadienoyl)-glycerol + H2O = (9Z,12Z)-octadecadienoate + glycerol + H(+). The catalysed reaction is 3-(9Z-octadecenoyl)-sn-glycero-1-phospho-(3'-(9Z-octadecenoyl)-1'-sn-glycerol) + H2O = 3-(9Z-octadecenoyl)-sn-glycero-1-phospho-(1'-sn-glycerol) + (9Z)-octadecenoate + H(+). It catalyses the reaction (S,S)-2-(9Z-octadecenoyl)-sn-glycero-1-phospho-(2'-(9Z-octadecenoyl)-1'-sn-glycerol) + H2O = (S,S)-2-(9Z-octadecenoyl)-sn-glycero-1-phospho-(1'-sn-glycerol) + (9Z)-octadecenoate + H(+). It carries out the reaction (R,R)-2-(9Z-octadecenoyl)-sn-glycero-3-phospho-(2'-(9Z-octadecenoyl)-3'-sn-glycerol) + H2O = (R,R)-2-(9Z-octadecenoyl)-sn-glycero-3-phospho-(3'-sn-glycerol) + (9Z)-octadecenoate + H(+). Its function is as follows. Lipase that preferentially hydrolysis medium-chain saturated monoacylglycerols including 2-arachidonoylglycerol. Through 2-arachidonoylglycerol degradation may regulate endocannabinoid signaling pathways. Also has a lysophosphatidyl lipase activity with a preference for lysophosphatidylglycerol among other lysophospholipids. Also able to degrade bis(monoacylglycero)phosphate (BMP) and constitutes the major enzyme for BMP catabolism. BMP, also known as lysobisphosphatidic acid, is enriched in late endosomes and lysosomes and plays a key role in the formation of intraluminal vesicles and in lipid sorting. The chain is Monoacylglycerol lipase ABHD6 from Rattus norvegicus (Rat).